We begin with the raw amino-acid sequence, 212 residues long: 3-isopropylmalate dehydratase small subunit 2 (212 aa).

It belongs to the LeuD family. LeuD type 1 subfamily. In terms of assembly, heterodimer of LeuC and LeuD.

It catalyses the reaction (2R,3S)-3-isopropylmalate = (2S)-2-isopropylmalate. The protein operates within amino-acid biosynthesis; L-leucine biosynthesis; L-leucine from 3-methyl-2-oxobutanoate: step 2/4. Catalyzes the isomerization between 2-isopropylmalate and 3-isopropylmalate, via the formation of 2-isopropylmaleate. The polypeptide is 3-isopropylmalate dehydratase small subunit 2 (Chromobacterium violaceum (strain ATCC 12472 / DSM 30191 / JCM 1249 / CCUG 213 / NBRC 12614 / NCIMB 9131 / NCTC 9757 / MK)).